Consider the following 355-residue polypeptide: Erythronate-4-phosphate dehydrogenase (355 aa).

Substrate contacts are provided by serine 45 and threonine 66. Aspartate 146 serves as a coordination point for NAD(+). The active site involves arginine 206. An NAD(+)-binding site is contributed by aspartate 229. Glutamate 234 is a catalytic residue. Histidine 251 functions as the Proton donor in the catalytic mechanism. Glycine 254 lines the NAD(+) pocket. Tyrosine 255 is a substrate binding site.

It belongs to the D-isomer specific 2-hydroxyacid dehydrogenase family. PdxB subfamily. Homodimer.

The protein resides in the cytoplasm. The enzyme catalyses 4-phospho-D-erythronate + NAD(+) = (R)-3-hydroxy-2-oxo-4-phosphooxybutanoate + NADH + H(+). The protein operates within cofactor biosynthesis; pyridoxine 5'-phosphate biosynthesis; pyridoxine 5'-phosphate from D-erythrose 4-phosphate: step 2/5. Its function is as follows. Catalyzes the oxidation of erythronate-4-phosphate to 3-hydroxy-2-oxo-4-phosphonooxybutanoate. The chain is Erythronate-4-phosphate dehydrogenase from Acinetobacter baumannii (strain ACICU).